We begin with the raw amino-acid sequence, 334 residues long: MTSIKNNNENKHIVVYRKIHQSLIEKLENQGYKVTQFEPINSNNIQEFYEAIKTANGLIGSVFKIDENVLSKAPFLECVSAISVGYDNYDLVVLNDRKIPLMHTPNVLNDSMADIMMGLMITVARKLAYCDKRMRNGEWNGPLDKSWFGLEVHHKKVGIIGMGRIGEVLAKRCRMGFDMEVAYYSRSRHLKVEELYDAKHQDLDTILSTSDFICVVLPGSQETKHFFSFGQFSKMKNSAIFINAGRGMTVDEVALIDALETGKIAGAGLDVFEKEPLNKDSKLLTLDNIVLLPHIGTSTIETQHIMSECAVNNLISALNGNLEKNCVNASIIKK.

Residues 164-165 (RI), 244-246 (AGR), and aspartate 270 contribute to the NAD(+) site. The active site involves arginine 246. Glutamate 275 is an active-site residue. The Proton donor role is filled by histidine 294. Residue 294–297 (HIGT) participates in NAD(+) binding.

This sequence belongs to the D-isomer specific 2-hydroxyacid dehydrogenase family.

The protein resides in the cytoplasm. The enzyme catalyses D-gluconate + NADP(+) = 2-dehydro-D-gluconate + NADPH + H(+). Its function is as follows. Catalyzes the NADPH-dependent reduction of 2,5-diketo-D-gluconate (25DKG) to 5-keto-D-gluconate (5KDG), 2-keto-D-gluconate (2KDG) to D-gluconate, and 2-keto-L-gulonate (2KLG) to L-idonate (IA). This chain is Probable 2-ketogluconate reductase (tkrA), found in Dictyostelium discoideum (Social amoeba).